The chain runs to 215 residues: 7-methyl-GTP pyrophosphatase (215 aa).

Asp-79 acts as the Proton acceptor in catalysis.

It belongs to the Maf family. YceF subfamily. A divalent metal cation is required as a cofactor.

It localises to the cytoplasm. The catalysed reaction is N(7)-methyl-GTP + H2O = N(7)-methyl-GMP + diphosphate + H(+). Functionally, nucleoside triphosphate pyrophosphatase that hydrolyzes 7-methyl-GTP (m(7)GTP). May have a dual role in cell division arrest and in preventing the incorporation of modified nucleotides into cellular nucleic acids. This chain is 7-methyl-GTP pyrophosphatase, found in Burkholderia mallei (strain ATCC 23344).